A 122-amino-acid chain; its full sequence is Small ribosomal subunit protein uS13 (122 aa).

The interval 95–122 is disordered; that stretch reads GLPVRGQRTHTNARTRKGPAKPIAGKKK.

This sequence belongs to the universal ribosomal protein uS13 family. As to quaternary structure, part of the 30S ribosomal subunit. Forms a loose heterodimer with protein S19. Forms two bridges to the 50S subunit in the 70S ribosome.

Located at the top of the head of the 30S subunit, it contacts several helices of the 16S rRNA. In the 70S ribosome it contacts the 23S rRNA (bridge B1a) and protein L5 of the 50S subunit (bridge B1b), connecting the 2 subunits; these bridges are implicated in subunit movement. Contacts the tRNAs in the A and P-sites. The chain is Small ribosomal subunit protein uS13 from Rhodospirillum rubrum (strain ATCC 11170 / ATH 1.1.1 / DSM 467 / LMG 4362 / NCIMB 8255 / S1).